The primary structure comprises 572 residues: NADP-dependent malic enzyme (572 aa).

M1 is modified (N-acetylmethionine). The active-site Proton donor is Y102. R155 is a binding site for NADP(+). Catalysis depends on K173, which acts as the Proton acceptor. A divalent metal cation contacts are provided by E245, D246, and D269. NADP(+) contacts are provided by residues D269 and 301–318 (GAGEAALGIAHLIVMALE). S336 carries the phosphoserine modification. N408 serves as a coordination point for NADP(+).

It belongs to the malic enzymes family. As to quaternary structure, homotetramer. Mg(2+) is required as a cofactor. It depends on Mn(2+) as a cofactor. As to expression, expressed in all tissues tested including liver, placenta and white adipose tissue.

The protein resides in the cytoplasm. The catalysed reaction is (S)-malate + NADP(+) = pyruvate + CO2 + NADPH. The enzyme catalyses oxaloacetate + H(+) = pyruvate + CO2. Functionally, catalyzes the oxidative decarboxylation of (S)-malate in the presence of NADP(+) and divalent metal ions, and decarboxylation of oxaloacetate. This Homo sapiens (Human) protein is NADP-dependent malic enzyme.